The sequence spans 306 residues: N-acetylmuramic acid 6-phosphate etherase (306 aa).

In terms of domain architecture, SIS spans 59–222 (ISEALRQGGR…STGAMVQLGK (164 aa)). The Proton donor role is filled by Glu-87. The active site involves Glu-118.

It belongs to the GCKR-like family. MurNAc-6-P etherase subfamily. Homodimer.

It carries out the reaction N-acetyl-D-muramate 6-phosphate + H2O = N-acetyl-D-glucosamine 6-phosphate + (R)-lactate. It functions in the pathway amino-sugar metabolism; N-acetylmuramate degradation. Functionally, specifically catalyzes the cleavage of the D-lactyl ether substituent of MurNAc 6-phosphate, producing GlcNAc 6-phosphate and D-lactate. This chain is N-acetylmuramic acid 6-phosphate etherase, found in Gloeothece citriformis (strain PCC 7424) (Cyanothece sp. (strain PCC 7424)).